Reading from the N-terminus, the 164-residue chain is Protein SprT (164 aa).

The 143-residue stretch at 14-156 folds into the SprT-like domain; it reads QQAETFFKRP…LCKRCRAILV (143 aa). His69 contributes to the Zn(2+) binding site. The active site involves Glu70. His73 provides a ligand contact to Zn(2+).

The protein belongs to the SprT family. Zn(2+) serves as cofactor.

It localises to the cytoplasm. This Pseudomonas putida (strain GB-1) protein is Protein SprT.